Consider the following 461-residue polypeptide: Ribulose bisphosphate carboxylase (461 aa).

Asn-112 is a substrate binding site. Lys-167 functions as the Proton acceptor in the catalytic mechanism. Lys-169 contributes to the substrate binding site. Mg(2+)-binding residues include Lys-192, Asp-194, and Glu-195. Lys-192 carries the N6-carboxylysine modification. His-288 (proton acceptor) is an active-site residue. Substrate is bound by residues Arg-289, His-322, and Ser-369.

The protein belongs to the RuBisCO large chain family. Type II subfamily. As to quaternary structure, homodimer. The cofactor is Mg(2+).

It carries out the reaction 2 (2R)-3-phosphoglycerate + 2 H(+) = D-ribulose 1,5-bisphosphate + CO2 + H2O. The catalysed reaction is D-ribulose 1,5-bisphosphate + O2 = 2-phosphoglycolate + (2R)-3-phosphoglycerate + 2 H(+). In terms of biological role, ruBisCO catalyzes two reactions: the carboxylation of D-ribulose 1,5-bisphosphate, the primary event in carbon dioxide fixation, as well as the oxidative fragmentation of the pentose substrate. Both reactions occur simultaneously and in competition at the same active site. This is Ribulose bisphosphate carboxylase from Rhodopseudomonas palustris (strain BisB18).